The sequence spans 1084 residues: AP-3 complex subunit beta-1 (1084 aa).

Residues 1–11 (MSSNSFAYNEQ) show a composition bias toward polar residues. A disordered region spans residues 1–26 (MSSNSFAYNEQSGGGEATELGQEATS). 2 positions are modified to phosphoserine: Ser276 and Ser609. The interval 663–800 (AGKAKKENPD…KEKKTKQERN (138 aa)) is disordered. Basic and acidic residues predominate over residues 666 to 677 (AKKENPDKKFYS). The segment covering 678–717 (ESEEEEDSSESSSDSESESGSESGEDEEDDRSGDSAEDSG) has biased composition (acidic residues). Over residues 718-729 (ESGSEPEAGKGR) the composition is skewed to low complexity. Basic and acidic residues predominate over residues 738–753 (GRGDSKDVDKEKENSK). Ser742 is subject to Phosphoserine. A compositionally biased stretch (low complexity) spans 754–767 (TSESSSGESSSIEE). Positions 768-781 (SSSDSESESESESE) are enriched in acidic residues. A compositionally biased stretch (basic and acidic residues) spans 782–800 (SESRKVTKEKEKKTKQERN).

The protein belongs to the adaptor complexes large subunit family. Adaptor protein complex 3 (AP-3) is a heterotetramer composed of two large adaptins (delta-type subunit AP3D1 and beta-type subunit AP3B1 or AP3B2), a medium adaptin (mu-type subunit AP3M1 or AP3M2) and a small adaptin (sigma-type subunit APS1 or AP3S2). AP-3 associates with the BLOC-1 complex. Interacts with KIF3A; interaction is direct; interaction is impaired by pyrophosphorylation of AP3B1. Post-translationally, phosphorylated on serine residues. Pyrophosphorylation by 5-diphosphoinositol pentakisphosphate (5-IP7) impairs interaction with KIF3A. Serine pyrophosphorylation is achieved by Mg(2+)-dependent, but enzyme independent transfer of a beta-phosphate from a inositol pyrophosphate to a pre-phosphorylated serine residue.

The protein localises to the cytoplasmic vesicle. It is found in the clathrin-coated vesicle membrane. The protein resides in the golgi apparatus. In terms of biological role, subunit of non-clathrin- and clathrin-associated adaptor protein complex 3 (AP-3) that plays a role in protein sorting in the late-Golgi/trans-Golgi network (TGN) and/or endosomes. The AP complexes mediate both the recruitment of clathrin to membranes and the recognition of sorting signals within the cytosolic tails of transmembrane cargo molecules. AP-3 appears to be involved in the sorting of a subset of transmembrane proteins targeted to lysosomes and lysosome-related organelles. In concert with the BLOC-1 complex, AP-3 is required to target cargos into vesicles assembled at cell bodies for delivery into neurites and nerve terminals. This is AP-3 complex subunit beta-1 (AP3B1) from Bos taurus (Bovine).